We begin with the raw amino-acid sequence, 455 residues long: uncharacterized protein (455 aa).

The first 24 residues, 1–24 (MKTTKILLHTGVLALSLLATQVMA), serve as a signal peptide directing secretion.

This is an uncharacterized protein from Pseudomonas aeruginosa (strain ATCC 15692 / DSM 22644 / CIP 104116 / JCM 14847 / LMG 12228 / 1C / PRS 101 / PAO1).